Consider the following 485-residue polypeptide: Glutamate--tRNA ligase (485 aa).

The 'HIGH' region signature appears at 11–21; it reads PSPTGHLHIGN. Residues 252-256 carry the 'KMSKS' region motif; the sequence is KLSKR. K255 serves as a coordination point for ATP.

Belongs to the class-I aminoacyl-tRNA synthetase family. Glutamate--tRNA ligase type 1 subfamily. Monomer.

Its subcellular location is the cytoplasm. It catalyses the reaction tRNA(Glu) + L-glutamate + ATP = L-glutamyl-tRNA(Glu) + AMP + diphosphate. In terms of biological role, catalyzes the attachment of glutamate to tRNA(Glu) in a two-step reaction: glutamate is first activated by ATP to form Glu-AMP and then transferred to the acceptor end of tRNA(Glu). The sequence is that of Glutamate--tRNA ligase from Bacillus mycoides (strain KBAB4) (Bacillus weihenstephanensis).